A 336-amino-acid polypeptide reads, in one-letter code: Holliday junction branch migration complex subunit RuvB (336 aa).

The tract at residues 4–184 (SDRLISSQSI…FGIVQRLEYY (181 aa)) is large ATPase domain (RuvB-L). ATP contacts are provided by residues I23, R24, G65, K68, T69, T70, 131 to 133 (EDY), R174, Y184, and R221. T69 is a Mg(2+) binding site. The interval 185–255 (SVDSLTQIVA…MAQQALEMLE (71 aa)) is small ATPAse domain (RuvB-S). The head domain (RuvB-H) stretch occupies residues 258–336 (QHGFDLMDRK…HFGFSAIEQE (79 aa)). DNA is bound by residues R313 and R318.

The protein belongs to the RuvB family. In terms of assembly, homohexamer. Forms an RuvA(8)-RuvB(12)-Holliday junction (HJ) complex. HJ DNA is sandwiched between 2 RuvA tetramers; dsDNA enters through RuvA and exits via RuvB. An RuvB hexamer assembles on each DNA strand where it exits the tetramer. Each RuvB hexamer is contacted by two RuvA subunits (via domain III) on 2 adjacent RuvB subunits; this complex drives branch migration. In the full resolvosome a probable DNA-RuvA(4)-RuvB(12)-RuvC(2) complex forms which resolves the HJ.

The protein resides in the cytoplasm. It carries out the reaction ATP + H2O = ADP + phosphate + H(+). The RuvA-RuvB-RuvC complex processes Holliday junction (HJ) DNA during genetic recombination and DNA repair, while the RuvA-RuvB complex plays an important role in the rescue of blocked DNA replication forks via replication fork reversal (RFR). RuvA specifically binds to HJ cruciform DNA, conferring on it an open structure. The RuvB hexamer acts as an ATP-dependent pump, pulling dsDNA into and through the RuvAB complex. RuvB forms 2 homohexamers on either side of HJ DNA bound by 1 or 2 RuvA tetramers; 4 subunits per hexamer contact DNA at a time. Coordinated motions by a converter formed by DNA-disengaged RuvB subunits stimulates ATP hydrolysis and nucleotide exchange. Immobilization of the converter enables RuvB to convert the ATP-contained energy into a lever motion, pulling 2 nucleotides of DNA out of the RuvA tetramer per ATP hydrolyzed, thus driving DNA branch migration. The RuvB motors rotate together with the DNA substrate, which together with the progressing nucleotide cycle form the mechanistic basis for DNA recombination by continuous HJ branch migration. Branch migration allows RuvC to scan DNA until it finds its consensus sequence, where it cleaves and resolves cruciform DNA. The sequence is that of Holliday junction branch migration complex subunit RuvB from Legionella pneumophila subsp. pneumophila (strain Philadelphia 1 / ATCC 33152 / DSM 7513).